Consider the following 139-residue polypeptide: Actin-depolymerizing factor 3 (139 aa).

The 135-residue stretch at 5-139 (ASGMAVHDDC…DLDVFKSRAN (135 aa)) folds into the ADF-H domain. The residue at position 6 (serine 6) is a Phosphoserine.

The protein belongs to the actin-binding proteins ADF family.

The protein resides in the cytoplasm. It localises to the cytoskeleton. Functionally, actin-depolymerizing protein. Severs actin filaments (F-actin) and binds to actin monomers. In Arabidopsis thaliana (Mouse-ear cress), this protein is Actin-depolymerizing factor 3 (ADF3).